A 286-amino-acid chain; its full sequence is 33 kDa chaperonin (286 aa).

2 cysteine pairs are disulfide-bonded: Cys-236/Cys-238 and Cys-264/Cys-267.

Belongs to the HSP33 family. Under oxidizing conditions two disulfide bonds are formed involving the reactive cysteines. Under reducing conditions zinc is bound to the reactive cysteines and the protein is inactive.

It localises to the cytoplasm. Functionally, redox regulated molecular chaperone. Protects both thermally unfolding and oxidatively damaged proteins from irreversible aggregation. Plays an important role in the bacterial defense system toward oxidative stress. The protein is 33 kDa chaperonin of Carboxydothermus hydrogenoformans (strain ATCC BAA-161 / DSM 6008 / Z-2901).